Consider the following 443-residue polypeptide: 23S rRNA (uracil(1939)-C(5))-methyltransferase RlmD (443 aa).

One can recognise a TRAM domain in the interval 12-70 (SKQLSAKVSLQVTRLDHLGAGIAQHNGKVVFIPGVLPGEKAMVQLTEQKKRYSRAKLLN). Residues Cys83, Cys89, Cys92, and Cys171 each contribute to the [4Fe-4S] cluster site. Residues Gln277, Phe306, Asn311, Glu327, Asp354, and Asp374 each contribute to the S-adenosyl-L-methionine site. Cys400 acts as the Nucleophile in catalysis.

Belongs to the class I-like SAM-binding methyltransferase superfamily. RNA M5U methyltransferase family. RlmD subfamily.

The enzyme catalyses uridine(1939) in 23S rRNA + S-adenosyl-L-methionine = 5-methyluridine(1939) in 23S rRNA + S-adenosyl-L-homocysteine + H(+). Catalyzes the formation of 5-methyl-uridine at position 1939 (m5U1939) in 23S rRNA. This is 23S rRNA (uracil(1939)-C(5))-methyltransferase RlmD from Shewanella woodyi (strain ATCC 51908 / MS32).